Reading from the N-terminus, the 188-residue chain is UPF0398 protein ABC2016 (188 aa).

Belongs to the UPF0398 family.

The polypeptide is UPF0398 protein ABC2016 (Shouchella clausii (strain KSM-K16) (Alkalihalobacillus clausii)).